Here is a 109-residue protein sequence, read N- to C-terminus: MVQVPKTRKTYCKKCNSHTNHKVSQYKKSKESTHAQGRRRYDMKQSGFGGQTKPIFRKKAKTTKKVALKFDCTTCKTKRVIPIKRCKTIVFMDITQIKKAKVNKKDPNW.

Residues 23-53 (VSQYKKSKESTHAQGRRRYDMKQSGFGGQTK) form a disordered region. The span at 28 to 43 (KSKESTHAQGRRRYDM) shows a compositional bias: basic and acidic residues.

This sequence belongs to the eukaryotic ribosomal protein eL42 family.

The protein resides in the cytoplasm. In Tetrahymena thermophila (strain SB210), this protein is Large ribosomal subunit protein eL42 (RPL36A).